The primary structure comprises 365 residues: tRNA N6-adenosine threonylcarbamoyltransferase (365 aa).

2 residues coordinate Fe cation: His119 and His123. Residues 141-145, Asp174, Gly187, and Asn289 contribute to the substrate site; that span reads LVSGG. Asp317 is a Fe cation binding site. The disordered stretch occupies residues 342-365; that stretch reads ARPRWPLDSKSPAMLGSGKKGAKA.

Belongs to the KAE1 / TsaD family. Fe(2+) serves as cofactor.

It is found in the cytoplasm. The enzyme catalyses L-threonylcarbamoyladenylate + adenosine(37) in tRNA = N(6)-L-threonylcarbamoyladenosine(37) in tRNA + AMP + H(+). Its function is as follows. Required for the formation of a threonylcarbamoyl group on adenosine at position 37 (t(6)A37) in tRNAs that read codons beginning with adenine. Is involved in the transfer of the threonylcarbamoyl moiety of threonylcarbamoyl-AMP (TC-AMP) to the N6 group of A37, together with TsaE and TsaB. TsaD likely plays a direct catalytic role in this reaction. The protein is tRNA N6-adenosine threonylcarbamoyltransferase of Roseobacter denitrificans (strain ATCC 33942 / OCh 114) (Erythrobacter sp. (strain OCh 114)).